Here is an 83-residue protein sequence, read N- to C-terminus: Cell division topological specificity factor (83 aa).

Belongs to the MinE family.

Its function is as follows. Prevents the cell division inhibition by proteins MinC and MinD at internal division sites while permitting inhibition at polar sites. This ensures cell division at the proper site by restricting the formation of a division septum at the midpoint of the long axis of the cell. In Pseudoalteromonas atlantica (strain T6c / ATCC BAA-1087), this protein is Cell division topological specificity factor.